We begin with the raw amino-acid sequence, 90 residues long: U7-theraphotoxin-Hhn1a 5 (90 aa).

The N-terminal stretch at 1–19 (MKTAIFTVVLALAVFAVLS) is a signal peptide. Positions 20 to 50 (FGWEANEKALSEESTELIHEKEAASETEARE) are excised as a propeptide. 3 disulfide bridges follow: Cys-51–Cys-65, Cys-58–Cys-70, and Cys-64–Cys-81.

The protein belongs to the neurotoxin 10 (Hwtx-1) family. 13 (Hntx-13) subfamily. As to expression, expressed by the venom gland.

Its subcellular location is the secreted. In terms of biological role, ion channel inhibitor. This chain is U7-theraphotoxin-Hhn1a 5, found in Cyriopagopus hainanus (Chinese bird spider).